Consider the following 268-residue polypeptide: Holocytochrome c-type synthase (268 aa).

The segment covering 1–22 (MGLSPSAPAVAVQASNASASPP) has biased composition (low complexity). The tract at residues 1 to 25 (MGLSPSAPAVAVQASNASASPPSGC) is disordered. Gly2 is lipidated: N-myristoyl glycine. HRM repeat units lie at residues 24–29 (GCPMHE) and 34–39 (GCPVNT).

Belongs to the cytochrome c-type heme lyase family.

It is found in the mitochondrion inner membrane. The protein localises to the membrane. It carries out the reaction holo-[cytochrome c] = apo-[cytochrome c] + heme b. In terms of biological role, lyase that catalyzes the covalent linking of the heme group to the cytochrome C apoprotein to produce the mature functional cytochrome. This chain is Holocytochrome c-type synthase, found in Homo sapiens (Human).